We begin with the raw amino-acid sequence, 238 residues long: ATP synthase subunit a (238 aa).

Transmembrane regions (helical) follow at residues 18–38, 76–96, 114–134, 166–186, and 193–213; these read LTLL…VFWA, YSLL…LGLF, NLAF…IEGV, SLAI…GLIV, and VYWW…SVFI.

Belongs to the ATPase A chain family. In terms of assembly, F-type ATPases have 2 components, CF(1) - the catalytic core - and CF(0) - the membrane proton channel. CF(1) has five subunits: alpha(3), beta(3), gamma(1), delta(1), epsilon(1). CF(0) has three main subunits: a(1), b(2) and c(9-12). The alpha and beta chains form an alternating ring which encloses part of the gamma chain. CF(1) is attached to CF(0) by a central stalk formed by the gamma and epsilon chains, while a peripheral stalk is formed by the delta and b chains.

It is found in the cell membrane. Key component of the proton channel; it plays a direct role in the translocation of protons across the membrane. In Streptococcus pyogenes serotype M5 (strain Manfredo), this protein is ATP synthase subunit a.